Reading from the N-terminus, the 130-residue chain is Large ribosomal subunit protein bL12 (130 aa).

This sequence belongs to the bacterial ribosomal protein bL12 family. Homodimer. Part of the ribosomal stalk of the 50S ribosomal subunit. Forms a multimeric L10(L12)X complex, where L10 forms an elongated spine to which 2 to 4 L12 dimers bind in a sequential fashion. Binds GTP-bound translation factors.

In terms of biological role, forms part of the ribosomal stalk which helps the ribosome interact with GTP-bound translation factors. Is thus essential for accurate translation. The sequence is that of Large ribosomal subunit protein bL12 from Chlamydia muridarum (strain MoPn / Nigg).